We begin with the raw amino-acid sequence, 64 residues long: Palmitoyl-CoA hydrolase (64 aa).

It belongs to the type-B carboxylesterase/lipase family. Monomer and homotrimer.

It localises to the microsome. The protein localises to the endoplasmic reticulum. The enzyme catalyses hexadecanoyl-CoA + H2O = hexadecanoate + CoA + H(+). Functionally, hydrolysis of a variety of CoA thioesters of long-chain fatty acids. The polypeptide is Palmitoyl-CoA hydrolase (Rattus norvegicus (Rat)).